A 165-amino-acid polypeptide reads, in one-letter code: Plastocyanin, chloroplastic (165 aa).

The N-terminal 66 residues, 1–66, are a transit peptide targeting the chloroplast; that stretch reads MATVTSSAAV…AGILAGNAMA (66 aa). The region spanning 67-165 is the Plastocyanin-like domain; it reads AEVLLGSSDG…AGMVGKVTVN (99 aa). Cu cation contacts are provided by His103, Cys150, His153, and Met158.

It belongs to the plastocyanin family. Requires Cu(2+) as cofactor.

The protein localises to the plastid. It localises to the chloroplast thylakoid membrane. Functionally, participates in electron transfer between P700 and the cytochrome b6-f complex in photosystem I. This Silene latifolia subsp. alba (White campion) protein is Plastocyanin, chloroplastic (PETE).